The primary structure comprises 253 residues: Large ribosomal subunit protein mL57 (253 aa).

The transit peptide at 1–28 directs the protein to the mitochondrion; the sequence is MENSMMFISRSLRRPVTALNCNLQSVRT.

This sequence belongs to the ribonuclease III family. Mitochondrion-specific ribosomal protein mL57 subfamily. In terms of assembly, component of the mitochondrial large ribosomal subunit (mt-LSU). Mature yeast 74S mitochondrial ribosomes consist of a small (37S) and a large (54S) subunit. The 37S small subunit contains a 15S ribosomal RNA (15S mt-rRNA) and 34 different proteins. The 54S large subunit contains a 21S rRNA (21S mt-rRNA) and 46 different proteins. mL57 forms a heterodimer with mL44 and stabilizes rRNA expansion segments 1/2 at a membrane-facing protuberance close to the point of attachment of the ribosome to the translocon in the membrane.

The protein resides in the mitochondrion. Its function is as follows. Component of the mitochondrial ribosome (mitoribosome), a dedicated translation machinery responsible for the synthesis of mitochondrial genome-encoded proteins, including at least some of the essential transmembrane subunits of the mitochondrial respiratory chain. The mitoribosomes are attached to the mitochondrial inner membrane and translation products are cotranslationally integrated into the membrane. The polypeptide is Large ribosomal subunit protein mL57 (MRPL15) (Saccharomyces cerevisiae (strain ATCC 204508 / S288c) (Baker's yeast)).